The sequence spans 217 residues: Probable cutinase 3 (217 aa).

A signal peptide spans 1 to 17 (MSLRSLFVAGLATLALA). 2 disulfides stabilise this stretch: Cys39/Cys118 and Cys65/Cys79. Ser129 acts as the Nucleophile in catalysis. A disulfide bridge links Cys180 with Cys187. Asp184 is an active-site residue. The active-site Proton donor/acceptor is the His197.

The protein belongs to the cutinase family.

The protein resides in the secreted. The enzyme catalyses cutin + H2O = cutin monomers.. Catalyzes the hydrolysis of complex carboxylic polyesters found in the cell wall of plants. Degrades cutin, a macromolecule that forms the structure of the plant cuticle. The chain is Probable cutinase 3 from Neosartorya fischeri (strain ATCC 1020 / DSM 3700 / CBS 544.65 / FGSC A1164 / JCM 1740 / NRRL 181 / WB 181) (Aspergillus fischerianus).